We begin with the raw amino-acid sequence, 341 residues long: GTP-binding protein GTR2 (341 aa).

GTP is bound by residues Ser23, Ser24, Ser43, His124, and Asp127.

The protein belongs to the GTR/RAG GTP-binding protein family. Heterodimer; with GTR1. Component of the GSE complex composed of GTR1, GTR2, SLM4, MEH1 and LTV1. Component of the EGO complex, at least composed of GTR2, SLM4 and MEH1. Interacts with GTR1; the interaction is direct.

It is found in the vacuole membrane. It catalyses the reaction GTP + H2O = GDP + phosphate + H(+). Functionally, GTPase involved in activation of the TORC1 signaling pathway, which promotes growth and represses autophagy in nutrient-rich conditions. Also required for TORC1 inactivation during nitrogen starvation. Required for intracellular sorting of GAP1 out of the endosome. Involved in the regulation of microautophagy. This is GTP-binding protein GTR2 from Saccharomyces cerevisiae (strain ATCC 204508 / S288c) (Baker's yeast).